The chain runs to 986 residues: Vacuolar membrane protease (986 aa).

Over 1-16 the chain is Cytoplasmic; sequence MAPLRLSRANPLAFAR. The chain crosses the membrane as a helical span at residues 17-37; that stretch reads WPVTLITAVVYLAFLIPLLIV. Residues 38 to 392 lie on the Vacuolar side of the membrane; the sequence is HHVVPSPPTA…TTFVLFELHT (355 aa). The N-linked (GlcNAc...) asparagine glycan is linked to N121. H176 and D188 together coordinate Zn(2+). E222 acts as the Proton acceptor in catalysis. Residues E223, E248, and H321 each coordinate Zn(2+). The helical transmembrane segment at 393-413 threads the bilayer; that stretch reads LFALSVTLLVVAPLALLVTGI. At 414 to 444 the chain is on the cytoplasmic side; sequence ALTRADKMYLFRTSAKADESLDSVPLQGLRG. A helical membrane pass occupies residues 445 to 465; the sequence is FFRFPFLFAIPTAVTVGLAYL. Over 466–475 the chain is Vacuolar; it reads VTKVNPLIIH. The helical transmembrane segment at 476-496 threads the bilayer; sequence SSEYAVWSMMLSAWTFLAWFV. Over 497-510 the chain is Cytoplasmic; it reads SRMADFARPTALHR. A helical transmembrane segment spans residues 511 to 531; that stretch reads IYTLTWMFVLAWVLLVISTVY. The Vacuolar portion of the chain corresponds to 532–535; the sequence is QNQR. The chain crosses the membrane as a helical span at residues 536–556; that stretch reads GLAGSYSVFFFFSGTFLATWI. At 557–668 the chain is on the cytoplasmic side; sequence SYLELFSLPR…SASLPTWTWT (112 aa). A compositionally biased stretch (polar residues) spans 573–585; the sequence is QNRPTSRRASSYG. The disordered stretch occupies residues 573-622; it reads QNRPTSRRASSYGGSRLGTASGEDHEEDDHDAEEEEEEQEPTESTSLLGG. Positions 596 to 613 are enriched in acidic residues; that stretch reads DHEEDDHDAEEEEEEQEP. A helical transmembrane segment spans residues 669–689; that stretch reads LQFLLMAPLVLIMVGPLALLL. The Vacuolar portion of the chain corresponds to 690 to 704; the sequence is TSALHQTGQDGSSSL. Residues 705–725 form a helical membrane-spanning segment; that stretch reads FIYVAIAALTTFLLTPLLPFI. Residues 726 to 732 are Cytoplasmic-facing; that stretch reads HRHTYHL. Residues 733-753 traverse the membrane as a helical segment; that stretch reads PVFLLLVFLGTLIYNLVAFPF. The Vacuolar portion of the chain corresponds to 754–986; sequence SPTNRLKLFF…LVEGWKGFSI (233 aa). N-linked (GlcNAc...) asparagine glycans are attached at residues N799, N840, and N948. A disordered region spans residues 840–859; the sequence is NTTDDKEGDEDTHHPRKARI.

This sequence belongs to the peptidase M28 family. Zn(2+) is required as a cofactor.

The protein resides in the vacuole membrane. Its function is as follows. May be involved in vacuolar sorting and osmoregulation. This is Vacuolar membrane protease from Aspergillus niger (strain ATCC MYA-4892 / CBS 513.88 / FGSC A1513).